Here is a 361-residue protein sequence, read N- to C-terminus: Phospho-N-acetylmuramoyl-pentapeptide-transferase (361 aa).

The next 10 membrane-spanning stretches (helical) occupy residues 26-46, 71-91, 97-117, 134-154, 168-188, 200-220, 236-256, 264-284, 290-310, and 338-358; these read AGGA…CIIE, TPTM…FLWA, FILW…CDDY, IFGQ…FPSN, GFFI…IVGS, GLAI…AYFA, GAGE…GFLW, IFMG…VSLF, VLVL…IQIF, and KVTV…FASL.

It belongs to the glycosyltransferase 4 family. MraY subfamily. It depends on Mg(2+) as a cofactor.

Its subcellular location is the cell membrane. The catalysed reaction is UDP-N-acetyl-alpha-D-muramoyl-L-alanyl-gamma-D-glutamyl-meso-2,6-diaminopimeloyl-D-alanyl-D-alanine + di-trans,octa-cis-undecaprenyl phosphate = di-trans,octa-cis-undecaprenyl diphospho-N-acetyl-alpha-D-muramoyl-L-alanyl-D-glutamyl-meso-2,6-diaminopimeloyl-D-alanyl-D-alanine + UMP. Its pathway is cell wall biogenesis; peptidoglycan biosynthesis. In terms of biological role, catalyzes the initial step of the lipid cycle reactions in the biosynthesis of the cell wall peptidoglycan: transfers peptidoglycan precursor phospho-MurNAc-pentapeptide from UDP-MurNAc-pentapeptide onto the lipid carrier undecaprenyl phosphate, yielding undecaprenyl-pyrophosphoryl-MurNAc-pentapeptide, known as lipid I. This Endomicrobium trichonymphae protein is Phospho-N-acetylmuramoyl-pentapeptide-transferase.